A 210-amino-acid chain; its full sequence is Imidazole glycerol phosphate synthase subunit HisH (210 aa).

The 210-residue stretch at 1–210 folds into the Glutamine amidotransferase type-1 domain; it reads MIAILDYGMG…KLLENFIRFI (210 aa). The active-site Nucleophile is the Cys-79. Residues His-191 and Glu-193 contribute to the active site.

In terms of assembly, heterodimer of HisH and HisF.

It localises to the cytoplasm. The catalysed reaction is 5-[(5-phospho-1-deoxy-D-ribulos-1-ylimino)methylamino]-1-(5-phospho-beta-D-ribosyl)imidazole-4-carboxamide + L-glutamine = D-erythro-1-(imidazol-4-yl)glycerol 3-phosphate + 5-amino-1-(5-phospho-beta-D-ribosyl)imidazole-4-carboxamide + L-glutamate + H(+). The enzyme catalyses L-glutamine + H2O = L-glutamate + NH4(+). It participates in amino-acid biosynthesis; L-histidine biosynthesis; L-histidine from 5-phospho-alpha-D-ribose 1-diphosphate: step 5/9. Functionally, IGPS catalyzes the conversion of PRFAR and glutamine to IGP, AICAR and glutamate. The HisH subunit catalyzes the hydrolysis of glutamine to glutamate and ammonia as part of the synthesis of IGP and AICAR. The resulting ammonia molecule is channeled to the active site of HisF. The chain is Imidazole glycerol phosphate synthase subunit HisH from Leptospira interrogans serogroup Icterohaemorrhagiae serovar copenhageni (strain Fiocruz L1-130).